Here is a 579-residue protein sequence, read N- to C-terminus: Protein LYRIC (579 aa).

Residues 1-48 (MAARSWQDELAQQAEEGSARLRELLSVGLGFLRTELGLDLGLEPKRYP) lie on the Lumenal side of the membrane. The segment at 1–71 (MAARSWQDEL…LLLFLLGYGW (71 aa)) is activation of NF-kappa-B. A helical membrane pass occupies residues 49–69 (GWVILVGTGALGLLLLFLLGY). The Cytoplasmic segment spans residues 70-579 (GWAAACAGAR…KKKKKARRET (510 aa)). An interaction with BCCIP region spans residues 72–168 (AAACAGARKK…EKSKKNKKKS (97 aa)). Residues 78–222 (ARKKRRSPPR…SGSLDSTIPG (145 aa)) are disordered. An interaction with RELA region spans residues 100–204 (DDLAQLKNLR…ISHREKRQQR (105 aa)). Positions 108–126 (LRSEEQKKKNRKKLPEKPK) are enriched in basic and acidic residues. Residues 159 to 168 (EKSKKNKKKS) are compositionally biased toward basic residues. Serine 179 is modified (phosphoserine). Over residues 197 to 207 (HREKRQQRKRD) the composition is skewed to basic residues. 2 positions are modified to phosphoserine: serine 215 and serine 250. At lysine 263 the chain carries N6-acetyllysine. Positions 277–579 (NLTVNGGGWS…KKKKKARRET (303 aa)) are disordered. Phosphoserine occurs at positions 297, 303, and 308. A compositionally biased stretch (polar residues) spans 317–329 (SAWTQDTGDTNAN). 2 positions are modified to phosphoserine: serine 341 and serine 366. 3 stretches are compositionally biased toward polar residues: residues 351–369 (EPVS…SRNQ), 380–391 (NGLSSADPSSDW), and 410–420 (LKSQEPISNDQ). Residues 378-440 (GLNGLSSADP…EGALPTGKSK (63 aa)) are lung-homing for mammary tumors. Serine 412 and serine 423 each carry phosphoserine. The segment covering 421-431 (KVSDDDKEKGE) has biased composition (basic and acidic residues). A compositionally biased stretch (basic residues) spans 438 to 448 (KSKKKKKKKKK). Positions 449–470 (QGEDNSHTQDTEDLEKDTREEL) are enriched in basic and acidic residues. 4 positions are modified to phosphoserine: serine 454, serine 475, serine 491, and serine 493. Polar residues-rich tracts occupy residues 517–533 (PSIT…SSQV) and 546–565 (NAKQ…NWES). Serine 565 carries the post-translational modification Phosphoserine. A compositionally biased stretch (basic residues) spans 568 to 579 (QIKKKKKARRET).

Interacts with BCCIP, CREBBP/CBP and RELA/p65. In the mammary gland, expressed at the apical surface of epithelial cells lining ducts, as well as in the mammary fat pad. Not detected in the spleen, kidney, lung, or skin; minute amounts seen in the liver. Expressed in Purkinje neurons in the early postnatal and adult cerebellum. Overexpressed in mammary tumors (at protein level).

The protein localises to the endoplasmic reticulum membrane. The protein resides in the nucleus membrane. It is found in the cell junction. It localises to the tight junction. Its subcellular location is the nucleus. The protein localises to the nucleolus. The protein resides in the cytoplasm. It is found in the perinuclear region. Functionally, down-regulates SLC1A2/EAAT2 promoter activity when expressed ectopically. Activates the nuclear factor kappa-B (NF-kappa-B) transcription factor. Promotes anchorage-independent growth of immortalized melanocytes and astrocytes which is a key component in tumor cell expansion. Promotes lung metastasis and also has an effect on bone and brain metastasis, possibly by enhancing the seeding of tumor cells to the target organ endothelium. Induces chemoresistance. The protein is Protein LYRIC (Mtdh) of Mus musculus (Mouse).